The chain runs to 937 residues: Inactive tyrosine-protein kinase transmembrane receptor ROR1 (937 aa).

The signal sequence occupies residues 1-29 (MHRPRRRGTRPPPLALLAALLLAARGADA). Over 30–406 (QETELSVSAE…KEKNKMEILY (377 aa)) the chain is Extracellular. The Ig-like C2-type domain maps to 42 to 141 (PTSSWNTSSE…VATNGKKVVS (100 aa)). N-linked (GlcNAc...) asparagine glycans are attached at residues asparagine 47 and asparagine 66. 9 disulfide bridges follow: cysteine 79–cysteine 131, cysteine 170–cysteine 235, cysteine 178–cysteine 228, cysteine 219–cysteine 260, cysteine 248–cysteine 296, cysteine 252–cysteine 282, cysteine 313–cysteine 391, cysteine 334–cysteine 374, and cysteine 362–cysteine 386. In terms of domain architecture, FZ spans 165–299 (EEDGFCQPYR…SPEAANCIRI (135 aa)). Residue asparagine 184 is glycosylated (N-linked (GlcNAc...) asparagine). One can recognise a Kringle domain in the interval 312–391 (KCYNSTGVDY…KSDLCDIPAC (80 aa)). N-linked (GlcNAc...) asparagine glycosylation occurs at asparagine 315. The chain crosses the membrane as a helical span at residues 407–427 (ILVPSVAIPLAIAFLFFFICV). The Cytoplasmic portion of the chain corresponds to 428–937 (CRNNQKSSSP…HTESMISAEV (510 aa)). The region spanning 473–746 (VRFMEELGEC…PRFKDIHVRL (274 aa)) is the Protein kinase domain. ATP-binding positions include 479 to 487 (LGECTFGKI) and lysine 506. The residue at position 645 (tyrosine 645) is a Phosphotyrosine; by autocatalysis. Positions 753 to 762 (SSHTSSTTPS) are enriched in low complexity. 3 disordered regions span residues 753-778 (SSHTSSTTPSGGNATTQTTSLSASPV), 840-890 (GPPR…HMSI), and 916-937 (QSSLLGDSHIHGHTESMISAEV). Over residues 763-778 (GGNATTQTTSLSASPV) the composition is skewed to polar residues. Residues 854 to 864 (RSPSSASGSTS) are compositionally biased toward low complexity. Positions 865–880 (TGHVASLPSSGSNQEA) are enriched in polar residues.

It belongs to the protein kinase superfamily. Tyr protein kinase family. ROR subfamily. As to quaternary structure, interacts with ERBB2 and IGFBP5. At postnatal P0, expressed in heart, lung, liver, kidney, spleen and inner ear.

The protein resides in the membrane. It localises to the cell projection. It is found in the axon. In terms of biological role, has very low kinase activity in vitro and is unlikely to function as a tyrosine kinase in vivo. Receptor for ligand WNT5A which activate downstream NFkB signaling pathway and may result in the inhibition of WNT3A-mediated signaling. In inner ear, crucial for spiral ganglion neurons to innervate auditory hair cells. Via IGFBP5 ligand, forms a complex with ERBB2 to enhance CREB oncogenic signaling. This Mus musculus (Mouse) protein is Inactive tyrosine-protein kinase transmembrane receptor ROR1 (Ror1).